Here is a 113-residue protein sequence, read N- to C-terminus: Nucleoid-associated protein RHA1_ro04210 (113 aa).

This sequence belongs to the YbaB/EbfC family. In terms of assembly, homodimer.

The protein localises to the cytoplasm. The protein resides in the nucleoid. Its function is as follows. Binds to DNA and alters its conformation. May be involved in regulation of gene expression, nucleoid organization and DNA protection. The chain is Nucleoid-associated protein RHA1_ro04210 from Rhodococcus jostii (strain RHA1).